Reading from the N-terminus, the 860-residue chain is MRFTSIEAVALTAVSLASADELAYSPPYYPSPWANGQGDWAEAYQRAVDIVSQMTLAEKVNLTTGTGWELELCVGQTGGVPRLGIPGMCAQDSPLGVRDSDYNSAFPAGVNVAATWDKNLAYLRGQAMGQEFSDKGADIQLGPAAGPLGRSPDGGRNWEGFSPDPALSGVLFAETIKGIQDAGVVATAKHYIAYEQEHFRQAPEAQGYGFNITESGSANLDDKTMHELYLWPFADAIRAGAGAVMCSYNQINNSYGCQNSYTLNKLLKAELGFQGFVMSDWAAHHAGVSGALAGLDMSMPGDVDYDSGTSYWGTNLTISVLNGTVPQWRVDDMAVRIMAAYYKVGRDRLWTPPNFSSWTRDEYGFKYYYVSEGPYEKVNQFVNVQRNHSELIRRIGADSTVLLKNDGALPLTGKERLVALIGEDAGSNPYGANGCSDRGCDNGTLAMGWGSGTANFPYLVTPEQAISNEVLKNKNGVFTATDNWAIDQIEALAKTASVSLVFVNADSGEGYINVDGNLGDRRNLTLWRNGDNVIKAAASNCNNTIVIIHSVGPVLVNEWYDNPNVTAILWGGLPGQESGNSLADVLYGRVNPGAKSPFTWGKTREAYQDYLYTEPNNGNGAPQEDFVEGVFIDYRGFDKRNETPIYEFGYGLSYTTFNYSNLQVEVLSAPAYEPASGETEAAPTFGEVGNASDYLYPDGLQRITKFIYPWLNSTDLEASSGDASYGQDASDYLPEGATDGSAQPILPAGGGAGGNPRLYDELIRVSVTIKNTGKVAGDEVPQLYVSLGGPNEPKIVLRQFERITLQPSKETQWSTTLTRRDLANWNVETQDWEITSYPKMVFAGSSSRKLPLRASLPTVH.

The first 19 residues, 1–19 (MRFTSIEAVALTAVSLASA), serve as a signal peptide directing secretion. N-linked (GlcNAc...) asparagine glycosylation is found at N61, N211, and N252. Residue D280 is part of the active site. N-linked (GlcNAc...) asparagine glycans are attached at residues N315, N322, N354, N387, N442, N523, N542, N564, N658, N690, and N712.

It belongs to the glycosyl hydrolase 3 family.

Its subcellular location is the secreted. The enzyme catalyses Hydrolysis of terminal, non-reducing beta-D-glucosyl residues with release of beta-D-glucose.. Its pathway is glycan metabolism; cellulose degradation. Functionally, beta-glucosidases are one of a number of cellulolytic enzymes involved in the degradation of cellulosic biomass. Catalyzes the last step releasing glucose from the inhibitory cellobiose. The chain is Probable beta-glucosidase A (bglA) from Aspergillus niger (strain ATCC MYA-4892 / CBS 513.88 / FGSC A1513).